A 152-amino-acid chain; its full sequence is Protein SprT-like (152 aa).

The 141-residue stretch at 7-147 (QRLVEEVSLQ…CGKCKGKLKP (141 aa)) folds into the SprT-like domain. H67 lines the Zn(2+) pocket. The active site involves E68. H71 contacts Zn(2+).

This sequence belongs to the SprT family. Requires Zn(2+) as cofactor.

The protein resides in the cytoplasm. The chain is Protein SprT-like from Bacillus cereus (strain G9842).